The following is a 252-amino-acid chain: Imidazole glycerol phosphate synthase subunit HisF (252 aa).

Catalysis depends on residues D11 and D130.

This sequence belongs to the HisA/HisF family. As to quaternary structure, heterodimer of HisH and HisF.

The protein resides in the cytoplasm. The enzyme catalyses 5-[(5-phospho-1-deoxy-D-ribulos-1-ylimino)methylamino]-1-(5-phospho-beta-D-ribosyl)imidazole-4-carboxamide + L-glutamine = D-erythro-1-(imidazol-4-yl)glycerol 3-phosphate + 5-amino-1-(5-phospho-beta-D-ribosyl)imidazole-4-carboxamide + L-glutamate + H(+). The protein operates within amino-acid biosynthesis; L-histidine biosynthesis; L-histidine from 5-phospho-alpha-D-ribose 1-diphosphate: step 5/9. In terms of biological role, IGPS catalyzes the conversion of PRFAR and glutamine to IGP, AICAR and glutamate. The HisF subunit catalyzes the cyclization activity that produces IGP and AICAR from PRFAR using the ammonia provided by the HisH subunit. The sequence is that of Imidazole glycerol phosphate synthase subunit HisF from Staphylococcus epidermidis (strain ATCC 35984 / DSM 28319 / BCRC 17069 / CCUG 31568 / BM 3577 / RP62A).